Reading from the N-terminus, the 437-residue chain is Eukaryotic peptide chain release factor subunit 1 (437 aa).

The NIKS motif; plays an important role in translational termination motif lies at 61–64 (NIKS).

This sequence belongs to the eukaryotic release factor 1 family. Component of the eRF1-eRF3-GTP ternary complex, composed of ETF1/ERF1 and eRF3 (GSPT1/ERF3A or GSPT2/ERF3B) and GTP.

It localises to the cytoplasm. In terms of biological role, component of the eRF1-eRF3-GTP ternary complex, a ternary complex that mediates translation termination in response to the termination codons. The eRF1-eRF3-GTP complex binds to a stop codon in the ribosomal A-site. ETF1/ERF1 is responsible for stop codon recognition and inducing hydrolysis of peptidyl-tRNA. Following GTP hydrolysis, eRF3 (GSPT1/ERF3A or GSPT2/ERF3B) dissociates, permitting ETF1/eRF1 to accommodate fully in the A-site, followed by hydrolysis of peptidyl-tRNA. The chain is Eukaryotic peptide chain release factor subunit 1 (etf1) from Xenopus laevis (African clawed frog).